Reading from the N-terminus, the 175-residue chain is Ribosome maturation factor RimM (175 aa).

A PRC barrel domain is found at 95–175 (EEGDYYWHDL…TITVDWDAGF (81 aa)).

This sequence belongs to the RimM family. In terms of assembly, binds ribosomal protein uS19.

The protein localises to the cytoplasm. Functionally, an accessory protein needed during the final step in the assembly of 30S ribosomal subunit, possibly for assembly of the head region. Essential for efficient processing of 16S rRNA. May be needed both before and after RbfA during the maturation of 16S rRNA. It has affinity for free ribosomal 30S subunits but not for 70S ribosomes. This Glaesserella parasuis serovar 5 (strain SH0165) (Haemophilus parasuis) protein is Ribosome maturation factor RimM.